Consider the following 642-residue polypeptide: Fork head protein homolog 2 (642 aa).

The disordered stretch occupies residues 1 to 23; it reads MTVRRLESKSEHISDDEERKEQL. An FHA domain is found at 96–160; the sequence is IILGREPANP…NGIKVDGKLF (65 aa). Residues 223-318 constitute a DNA-binding region (fork-head); it reads KPPYSYSVMI…AKTRKTPRKR (96 aa). A compositionally biased stretch (basic residues) spans 310–319; the sequence is KTRKTPRKRS. Disordered regions lie at residues 310–392, 519–574, and 586–642; these read KTRK…ETYK, VSDS…TEEN, and ATME…KSSA. Residues S319, S321, S322, S334, and S336 each carry the phosphoserine modification. Low complexity predominate over residues 348-362; the sequence is TSIPAAEPASSTTSA. Polar residues-rich tracts occupy residues 363-381, 519-552, and 599-642; these read RDQT…TAET, VSDS…SANK, and TPTS…KSSA. Residues S375, S535, and S626 each carry the phosphoserine modification.

Post-translationally, phosphorylated. Occurs periodically during mitosis.

The protein resides in the nucleus. Required for promoter sequence element PCB-driven, M-phase-specific transcription. Acts as a transcriptional activator with a role in the regulation of mitosis. Binds, cooperatively with mcm1, the CLB cluster regulatory elements throughout the cell cycle. Regulates the periodic transcription of cdc15 and spo12. Required for the correct timing, positioning and contraction of the division septum. The chain is Fork head protein homolog 2 (fkh2) from Schizosaccharomyces pombe (strain 972 / ATCC 24843) (Fission yeast).